The chain runs to 376 residues: Multiphosphoryl transfer protein (376 aa).

Residues 2–142 (FQLSVQDIHP…EELRALLMGE (141 aa)) form the PTS EIIA type-2 domain. His-62 acts as the Tele-phosphohistidine intermediate; for EIIA activity in catalysis. His-62 carries the phosphohistidine; by HPr modification. Residues 156–284 (TLDIVASDLL…LTSDDAPTDD (129 aa)) are m domain. The HPr domain occupies 285-375 (VLSAEFVVRN…DAIAAGLGEG (91 aa)). The active-site Pros-phosphohistidine intermediate; for HPr activity is His-299. Phosphohistidine; by EI is present on His-299.

The protein localises to the cytoplasm. Its function is as follows. The phosphoenolpyruvate-dependent sugar phosphotransferase system (sugar PTS), a major carbohydrate active transport system, catalyzes the phosphorylation of incoming sugar substrates concomitantly with their translocation across the cell membrane. The enzyme II FruAB PTS system is involved in fructose transport. The protein is Multiphosphoryl transfer protein of Escherichia coli O157:H7.